Consider the following 233-residue polypeptide: Putative N-acetylmannosamine-6-phosphate 2-epimerase (233 aa).

The protein belongs to the NanE family.

The catalysed reaction is an N-acyl-D-glucosamine 6-phosphate = an N-acyl-D-mannosamine 6-phosphate. It functions in the pathway amino-sugar metabolism; N-acetylneuraminate degradation; D-fructose 6-phosphate from N-acetylneuraminate: step 3/5. Converts N-acetylmannosamine-6-phosphate (ManNAc-6-P) to N-acetylglucosamine-6-phosphate (GlcNAc-6-P). The sequence is that of Putative N-acetylmannosamine-6-phosphate 2-epimerase from Yersinia pseudotuberculosis serotype IB (strain PB1/+).